The sequence spans 56 residues: MASKGGREKIKLVSTAETGHFYTTTKNKKTMPEKMSIIKFDPKARKHVEYKEAKLK.

It belongs to the bacterial ribosomal protein bL33 family.

The polypeptide is Large ribosomal subunit protein bL33 (Acidovorax sp. (strain JS42)).